We begin with the raw amino-acid sequence, 1010 residues long: Retinoblastoma-related protein 3 (1010 aa).

Residues 416–616 (TPVSTAMTTA…EKGSSMYNSL (201 aa)) are domain A. The pocket stretch occupies residues 416 to 858 (TPVSTAMTTA…NEVFIPAVKS (443 aa)). A spacer region spans residues 617-727 (IVARPALSVE…PAAGGETCAE (111 aa)). The domain B stretch occupies residues 728–858 (TGIGVFFSKI…NEVFIPAVKS (131 aa)). Disordered stretches follow at residues 867 to 889 (ASAS…FPES) and 986 to 1010 (GSDR…PSDS).

Belongs to the retinoblastoma protein (RB) family.

The protein localises to the nucleus. In terms of biological role, regulator of biological processes that recruits a histone deacetylase to control gene transcription. May play a role in the entry into mitosis, negatively regulating the cell proliferation. Formation of stable complexes with geminiviridae replication-associated proteins may create a cellular environment which favors viral DNA replication. The sequence is that of Retinoblastoma-related protein 3 (RBR3) from Zea mays (Maize).